A 515-amino-acid chain; its full sequence is Cell division control protein 6 homolog (515 aa).

Positions Met1–Thr24 are enriched in low complexity. The tract at residues Met1–Arg70 is disordered. The span at Asp43–Lys52 shows a compositional bias: polar residues.

It belongs to the CDC6/cdc18 family.

It is found in the nucleus. May be involved in the initiation of DNA replication. This Oryza sativa subsp. japonica (Rice) protein is Cell division control protein 6 homolog.